The primary structure comprises 280 residues: Phosphonates import ATP-binding protein PhnC (280 aa).

Residues 4–239 enclose the ABC transporter domain; that stretch reads ITVTNLHKSY…VIDDIYGNIQ (236 aa). 36 to 43 contacts ATP; that stretch reads GESGAGKS. The tract at residues 246-280 is disordered; that stretch reads GDDANADVAPTTSSDGGTDAAGGPDQQPASDPHLS.

This sequence belongs to the ABC transporter superfamily. Phosphonates importer (TC 3.A.1.9.1) family. The complex is composed of two ATP-binding proteins (PhnC), two transmembrane proteins (PhnE) and a solute-binding protein (PhnD).

The protein localises to the cell membrane. The catalysed reaction is phosphonate(out) + ATP + H2O = phosphonate(in) + ADP + phosphate + H(+). In terms of biological role, part of the ABC transporter complex PhnCDE involved in phosphonates import. Responsible for energy coupling to the transport system. This Halobacterium salinarum (strain ATCC 700922 / JCM 11081 / NRC-1) (Halobacterium halobium) protein is Phosphonates import ATP-binding protein PhnC.